The following is a 152-amino-acid chain: FMN reductase (NADH) RutF (152 aa).

Belongs to the non-flavoprotein flavin reductase family. RutF subfamily.

The catalysed reaction is FMNH2 + NAD(+) = FMN + NADH + 2 H(+). Catalyzes the reduction of FMN to FMNH2 which is used to reduce pyrimidine by RutA via the Rut pathway. This is FMN reductase (NADH) RutF from Shigella sonnei (strain Ss046).